The primary structure comprises 205 residues: HTH-type transcriptional regulator PksA (205 aa).

The 61-residue stretch at 8–68 folds into the HTH tetR-type domain; it reads EKRRKQIAEA…FAMKLVQEKV (61 aa). A DNA-binding region (H-T-H motif) is located at residues 31 to 50; it reads SARNIAKEAGLSLGALRHYF.

In terms of biological role, transcriptional regulation of the polyketide synthase operon. This Bacillus subtilis (strain 168) protein is HTH-type transcriptional regulator PksA (pksA).